The following is a 225-amino-acid chain: Glucose-induced degradation protein 8 homolog (225 aa).

Residues 22-54 (QRAEMNRLIMDYLVTEGYKEAAEKFRIESGTQP) form the LisH domain. A CTLH domain is found at 60–117 (SLDDRIKIREAVQKGDLEQAVSMTNKLNPDILDSNQQLYFHLQQQRLIELIREKDIEA).

The protein belongs to the GID8 family.

The protein localises to the cytoplasm. It is found in the nucleus. Core component of the CTLH E3 ubiquitin-protein ligase complex that mediates ubiquitination and subsequent proteasomal degradation of target proteins. Acts as a positive regulator of Wnt signaling pathway by promoting beta-catenin (CTNNB1) nuclear accumulation. The chain is Glucose-induced degradation protein 8 homolog from Nematostella vectensis (Starlet sea anemone).